The primary structure comprises 546 residues: Apolipoprotein N-acyltransferase 1 (546 aa).

The next 7 membrane-spanning stretches (helical) occupy residues 14–34 (FLLF…PLLP), 41–61 (AYGA…FAVV), 62–82 (FWGG…LFVF), 85–105 (VALC…CLAL), 122–142 (LVWL…PYGV), 151–171 (LPLI…LVVF), and 194–214 (FLSA…LCGF). Residues 233-502 (AKVALVQPNG…PGVLVADVPI (270 aa)) enclose the CN hydrolase domain. Glu280 serves as the catalytic Proton acceptor. The active site involves Lys361. Cys413 functions as the Nucleophile in the catalytic mechanism. A helical membrane pass occupies residues 514–534 (GDALGVFFCVASLFILIAGGV).

Belongs to the CN hydrolase family. Apolipoprotein N-acyltransferase subfamily.

The protein resides in the cell inner membrane. It carries out the reaction N-terminal S-1,2-diacyl-sn-glyceryl-L-cysteinyl-[lipoprotein] + a glycerophospholipid = N-acyl-S-1,2-diacyl-sn-glyceryl-L-cysteinyl-[lipoprotein] + a 2-acyl-sn-glycero-3-phospholipid + H(+). Its pathway is protein modification; lipoprotein biosynthesis (N-acyl transfer). Its function is as follows. Catalyzes the phospholipid dependent N-acylation of the N-terminal cysteine of apolipoprotein, the last step in lipoprotein maturation. This chain is Apolipoprotein N-acyltransferase 1, found in Treponema pallidum (strain Nichols).